A 247-amino-acid chain; its full sequence is 3-deoxy-manno-octulosonate cytidylyltransferase (247 aa).

Belongs to the KdsB family.

It localises to the cytoplasm. It catalyses the reaction 3-deoxy-alpha-D-manno-oct-2-ulosonate + CTP = CMP-3-deoxy-beta-D-manno-octulosonate + diphosphate. Its pathway is nucleotide-sugar biosynthesis; CMP-3-deoxy-D-manno-octulosonate biosynthesis; CMP-3-deoxy-D-manno-octulosonate from 3-deoxy-D-manno-octulosonate and CTP: step 1/1. It functions in the pathway bacterial outer membrane biogenesis; lipopolysaccharide biosynthesis. Its function is as follows. Activates KDO (a required 8-carbon sugar) for incorporation into bacterial lipopolysaccharide in Gram-negative bacteria. The polypeptide is 3-deoxy-manno-octulosonate cytidylyltransferase (Methylorubrum extorquens (strain PA1) (Methylobacterium extorquens)).